Reading from the N-terminus, the 772-residue chain is Nudix hydrolase 3 (772 aa).

Over residues 1 to 14 (MAEEHFDVLTKSGE) the composition is skewed to basic and acidic residues. The interval 1 to 25 (MAEEHFDVLTKSGEKTGVSKPRGEV) is disordered. Residues 30-172 (DYHRAVHVWI…DPAYVPYDVN (143 aa)) form the Nudix hydrolase domain. A Nudix box motif is present at residues 69 to 90 (GHISAGDTSLLSAQRELEEELG). Mg(2+) is bound by residues E84 and E88.

Belongs to the Nudix hydrolase family. The cofactor is Mg(2+). It depends on Mn(2+) as a cofactor. As to expression, expressed in roots, stems and, at lower level, leaves.

Probably mediates the hydrolysis of some nucleoside diphosphate derivatives. In Arabidopsis thaliana (Mouse-ear cress), this protein is Nudix hydrolase 3 (NUDT3).